The sequence spans 460 residues: WD repeat-containing protein 41 (460 aa).

WD repeat units lie at residues 40 to 79 (EAHR…KLLE), 82 to 128 (GHTQ…QIQR), 131 to 168 (CFQS…LCKT), 220 to 258 (DHQD…VQAC), 321 to 359 (AHDS…QLAA), and 403 to 441 (GHSS…SGVR).

As to quaternary structure, component of the C9orf72-SMCR8 complex, at least composed of C9orf72, SMCR8 and WDR41. The complex is formed of two protomers, each individually consisting of one molecule each of C9orf72, SMCR8 and WDR41. The protomers homodimerize via an interaction between C9orf72 (via C-terminus) and SMCR8 (via N-terminus). Within each protomer SMCR8 (via DENN domain) acts as a bridging protein between WDR41 (via C-terminus and N-terminus) and C9orf72 (via C-terminus). The C9orf72-SMCR8 complex associates with the ULK1/ATG1 kinase complex.

The protein resides in the cytoplasm. Functionally, non-catalytic component of the C9orf72-SMCR8 complex, a complex that has guanine nucleotide exchange factor (GEF) activity and regulates autophagy. The C9orf72-SMCR8 complex promotes the exchange of GDP to GTP, converting inactive GDP-bound RAB8A and RAB39B into their active GTP-bound form, thereby promoting autophagosome maturation. As part of the C9orf72-SMCR8 complex, stimulates RAB8A and RAB11A GTPase activity in vitro, however WDR42 is shown not be an essential complex component for this function. The C9orf72-SMCR8 complex also acts as a negative regulator of autophagy initiation by interacting with the ULK1/ATG1 kinase complex and inhibiting its protein kinase activity. The polypeptide is WD repeat-containing protein 41 (Mus musculus (Mouse)).